We begin with the raw amino-acid sequence, 635 residues long: Threonine--tRNA ligase (635 aa).

One can recognise a TGS domain in the interval 1–62 (MITITLPDGS…EHDAILRIIT (62 aa)). The segment at 244 to 535 (DHRKIGKAQD…LIEHYAGIWP (292 aa)) is catalytic. C335, H386, and H512 together coordinate Zn(2+).

The protein belongs to the class-II aminoacyl-tRNA synthetase family. Homodimer. Zn(2+) is required as a cofactor.

The protein localises to the cytoplasm. The catalysed reaction is tRNA(Thr) + L-threonine + ATP = L-threonyl-tRNA(Thr) + AMP + diphosphate + H(+). Catalyzes the attachment of threonine to tRNA(Thr) in a two-step reaction: L-threonine is first activated by ATP to form Thr-AMP and then transferred to the acceptor end of tRNA(Thr). Also edits incorrectly charged L-seryl-tRNA(Thr). This Xylella fastidiosa (strain M23) protein is Threonine--tRNA ligase.